Reading from the N-terminus, the 2946-residue chain is Neurobeachin (2946 aa).

Positions 971–995 (ENIKKGKKGNVSTISGLSSQTTGAK) are disordered. Residues 980-993 (NVSTISGLSSQTTG) are compositionally biased toward polar residues. Residues S1011 and S1014 each carry the phosphoserine modification. The WD 1 repeat unit spans residues 1326–1368 (TTMFRIPEFKWSPMHQRLLTDLLFALETDVHVWRSHSTKSVMD). Disordered stretches follow at residues 1490-1531 (QRDR…LSPI), 1651-1675 (TIKE…HTDS), 1711-1731 (VKKS…PATS), and 1841-1860 (GAVD…VNGA). The span at 1497-1517 (SSHGSSKPQEVPQSVTATAAS) shows a compositional bias: polar residues. Residue S1529 is modified to Phosphoserine. 2 positions are modified to phosphoserine: S1714 and S1717. Residues 1716-1731 (ESLTENPSETLKPATS) are compositionally biased toward polar residues. Residues 1845-1855 (SGSSSSSSSSS) show a composition bias toward low complexity. Residue S2138 is modified to Phosphoserine. The region spanning 2147-2255 (NLAGPVVLST…TVKKVVYSLP (109 aa)) is the BEACH-type PH domain. One can recognise a BEACH domain in the interval 2274-2563 (ATPRQLYKSS…QLLIEPHPPR (290 aa)). Phosphoserine is present on S2575. 4 WD repeats span residues 2718-2761 (GHWD…HIIG), 2778-2818 (GHDH…RALE), 2860-2899 (EIND…QLYI), and 2902-2941 (GCDA…WHYE).

Belongs to the WD repeat neurobeachin family. Interacts with RII subunit of PKA. In terms of tissue distribution, predominant in many brain structures. Also expressed at medium levels in spleen, thymus, prostate, testis and ovary. Low level expression is seen in heart, kidney, pancreas, skeletal muscle and intestine.

It is found in the cytoplasm. Its subcellular location is the membrane. Binds to type II regulatory subunits of protein kinase A and anchors/targets them to the membrane. May anchor the kinase to cytoskeletal and/or organelle-associated proteins. The sequence is that of Neurobeachin from Homo sapiens (Human).